Here is a 221-residue protein sequence, read N- to C-terminus: Probable transaldolase (221 aa).

Catalysis depends on lysine 83, which acts as the Schiff-base intermediate with substrate.

Belongs to the transaldolase family. Type 3B subfamily.

It is found in the cytoplasm. The enzyme catalyses D-sedoheptulose 7-phosphate + D-glyceraldehyde 3-phosphate = D-erythrose 4-phosphate + beta-D-fructose 6-phosphate. The protein operates within carbohydrate degradation; pentose phosphate pathway; D-glyceraldehyde 3-phosphate and beta-D-fructose 6-phosphate from D-ribose 5-phosphate and D-xylulose 5-phosphate (non-oxidative stage): step 2/3. In terms of biological role, transaldolase is important for the balance of metabolites in the pentose-phosphate pathway. The sequence is that of Probable transaldolase from Herpetosiphon aurantiacus (strain ATCC 23779 / DSM 785 / 114-95).